The chain runs to 232 residues: Ubiquinone biosynthesis O-methyltransferase (232 aa).

S-adenosyl-L-methionine contacts are provided by arginine 36, glycine 55, aspartate 76, and leucine 120.

The protein belongs to the methyltransferase superfamily. UbiG/COQ3 family.

The catalysed reaction is a 3-demethylubiquinol + S-adenosyl-L-methionine = a ubiquinol + S-adenosyl-L-homocysteine + H(+). It catalyses the reaction a 3-(all-trans-polyprenyl)benzene-1,2-diol + S-adenosyl-L-methionine = a 2-methoxy-6-(all-trans-polyprenyl)phenol + S-adenosyl-L-homocysteine + H(+). It functions in the pathway cofactor biosynthesis; ubiquinone biosynthesis. O-methyltransferase that catalyzes the 2 O-methylation steps in the ubiquinone biosynthetic pathway. The sequence is that of Ubiquinone biosynthesis O-methyltransferase from Azotobacter vinelandii (strain DJ / ATCC BAA-1303).